Here is a 469-residue protein sequence, read N- to C-terminus: Lactonohydrolase oryH (469 aa).

Residues 1–20 form the signal peptide; that stretch reads MYLSLRLVSLALCIAPLASA.

The protein belongs to the SMP-30/CGR1 family.

It functions in the pathway secondary metabolite biosynthesis. Functionally, lactonohydrolase; part of the gene cluster that mediates the biosynthesis of oryzines, natural products with an unusual maleidride backbone. The two subunits of the fungal fatty acid synthase oryfasA and oryfasB probably form octenoic acid. This fatty acid is most likely activated by the acyl-CoA ligase oryP to give octenyl-CoA before the citrate synthase-like protein oryE catalyzes condensation with oxaloacetate to form tricarboxylic acid. The next steps of the pathways are conjectural, but a favorite possible route has been proposed, beginning with decarboxylation and concomitant dehydration by the decarboxylase oryM, followed by tautomerization, which may lead to the production of a diene intermediate. Reduction of this diene intermediate could give the known metabolite piliformic acid. On the pathway to oryzine B and oryzine A, however, hydroxylation of the diene by the alpha-ketoglutarate-dependent dioxygenase oryG and lactonisation by the lactonohydrolases oryH or oryL could give oryzine B directly. Finally, enoyl reduction by the dehydrogenase oryD would then convert oryzine B into oryzine A. The chain is Lactonohydrolase oryH from Aspergillus oryzae (strain ATCC 42149 / RIB 40) (Yellow koji mold).